Consider the following 245-residue polypeptide: Rhamnosyl O-methyltransferase (245 aa).

The N-terminal stretch at 1–38 (MGLVWRSRTSLVGQLIGLVRLVASFAAQLFYRPSDAVA) is a signal peptide.

It belongs to the rhamnosyl O-methyltransferase family.

In terms of biological role, catalyzes the O-methylation of the hydroxyl group located on C-2 of the first rhamnosyl residue linked to the phenolic group of glycosylated phenolphthiocerol dimycocerosates (PGL) and p-hydroxybenzoic acid derivatives (p-HBAD). The sequence is that of Rhamnosyl O-methyltransferase from Mycobacterium bovis (strain ATCC BAA-935 / AF2122/97).